The chain runs to 211 residues: Large ribosomal subunit protein uL4 (211 aa).

Residues 44-94 form a disordered region; that stretch reads RSGNHATKTRSEVRGGGKKPWSQKGTGHARQGSTRAPHWVGGGTVHGPQKR.

It belongs to the universal ribosomal protein uL4 family. Part of the 50S ribosomal subunit.

In terms of biological role, one of the primary rRNA binding proteins, this protein initially binds near the 5'-end of the 23S rRNA. It is important during the early stages of 50S assembly. It makes multiple contacts with different domains of the 23S rRNA in the assembled 50S subunit and ribosome. Functionally, forms part of the polypeptide exit tunnel. The protein is Large ribosomal subunit protein uL4 of Leptospira borgpetersenii serovar Hardjo-bovis (strain JB197).